The sequence spans 490 residues: Cysteine desulfurase, mitochondrial (490 aa).

Pyridoxal 5'-phosphate-binding positions include 161-162 (AT), N241, Q269, and 289-291 (SSH). Position 292 is an N6-(pyridoxal phosphate)lysine (K292). Position 329 (T329) interacts with pyridoxal 5'-phosphate. C414 serves as the catalytic Cysteine persulfide intermediate. C414 contributes to the [2Fe-2S] cluster binding site.

The protein belongs to the class-V pyridoxal-phosphate-dependent aminotransferase family. NifS/IscS subfamily. It depends on pyridoxal 5'-phosphate as a cofactor.

It is found in the mitochondrion. It carries out the reaction (sulfur carrier)-H + L-cysteine = (sulfur carrier)-SH + L-alanine. Its function is as follows. Catalyzes the removal of elemental sulfur from cysteine to produce alanine. It supplies the inorganic sulfur for iron-sulfur (Fe-S) clusters. Plays a role in both tRNA-processing and mitochondrial metabolism. Involved in the 2-thio-modification of both 5-carboxymethylaminomethyl-2-thiouridine in mitochondrial tRNAs and 5-methoxycarbonylmethyl-2-thiouridine (mcm5s2U) in cytoplasmic tRNAs. In Eremothecium gossypii (strain ATCC 10895 / CBS 109.51 / FGSC 9923 / NRRL Y-1056) (Yeast), this protein is Cysteine desulfurase, mitochondrial.